A 593-amino-acid chain; its full sequence is F-box/LRR-repeat protein 17 (593 aa).

The region spanning 120–177 (DLDLQLDTDIVQPGRFHAVGLWEVLKRLPPSSLLMAARVCKGWRETSRKMWKAAEELR) is the F-box domain. LRR repeat units follow at residues 178–206 (IRVP…SLKI), 207–232 (ESDF…EITT), 237–262 (VNRI…KMEG), 276–304 (LSTL…SLEF), 335–361 (SLKL…SLVL), 362–387 (GINI…DLSG), 414–439 (CPNI…DCGM), 477–502 (LSLW…NLNL), and 503–525 (CSNL…YASG).

Part of a SCF (ASK-cullin-F-box) protein ligase complex. Interacts with SKP1A/ASK1, KRP4, KRP6 and KRP7. Expressed in developing pollen.

The protein resides in the nucleus. Its pathway is protein modification; protein ubiquitination. Essential protein for male fertility. Component of the SCF(ASK-cullin-F-box) E3 ubiquitin ligase complex SCF(FBL17), which mediates the ubiquitination and subsequent proteasomal degradation of target proteins. Enables the switch in cell cycle control leading to male germ cell lineage formation from microspores after meiosis. Targets CDKA-1 inhibitors the degradation specifically in male germ cells (e.g. KRP6 and KRP7) and thus enables CDKA-1 activation and germ cell S-phase progression. Promotes twin sperm cell production and double fertilization. This Arabidopsis thaliana (Mouse-ear cress) protein is F-box/LRR-repeat protein 17 (FBL17).